The primary structure comprises 120 residues: PE family protein PE10 (120 aa).

Residues 29 to 59 are disordered; that stretch reads GQVTGNGGSGNSGTSAAAANPNSDNTASIAD. The span at 40–51 shows a compositional bias: low complexity; that stretch reads SGTSAAAANPNS.

The protein belongs to the mycobacterial PE family. Forms a complex with PE9. The complex interacts with human TLR4.

The protein resides in the secreted. Its subcellular location is the cell wall. Functionally, together with PE9, induces macrophage apoptosis through human Toll-like receptor 4 (TLR4) signaling pathway. Interaction with TLR4 leads to increased levels of phospho-IRF-3, increase in the transcript levels of IFN-beta and pro-apoptotic genes, up-regulation of IL-10, down-regulation of IL-1b and enhanced levels of macrophage apoptosis. This Mycobacterium tuberculosis (strain ATCC 25618 / H37Rv) protein is PE family protein PE10.